Consider the following 170-residue polypeptide: CFA/I fimbrial subunit B (170 aa).

Residues 1-23 (MKFKKTIGAMALTTMFVAVSASA) form the signal peptide.

The protein belongs to the fimbrial CS1 protein family. CFA/I fimbriae are rather rigid, thread-like filaments of 0.5-1 micrometer, with an apparent axial hole, and a diameter of 7 nanometers. A single CFA/I fimbria consists of about 100 identical protein subunits.

It localises to the fimbrium. Fimbriae (also called pili), polar filaments radiating from the surface of the bacterium to a length of 0.5-1.5 micrometers and numbering 100-300 per cell, enable bacteria to colonize the epithelium of specific host organs. The polypeptide is CFA/I fimbrial subunit B (cfaB) (Escherichia coli O78:H11 (strain H10407 / ETEC)).